The chain runs to 411 residues: Serine hydroxymethyltransferase (411 aa).

Residues leucine 117 and 121-123 (GHL) each bind (6S)-5,6,7,8-tetrahydrofolate. Lysine 226 bears the N6-(pyridoxal phosphate)lysine mark. Residues glutamate 241 and 349–351 (SPF) each bind (6S)-5,6,7,8-tetrahydrofolate.

The protein belongs to the SHMT family. As to quaternary structure, homodimer. It depends on pyridoxal 5'-phosphate as a cofactor.

The protein resides in the cytoplasm. The enzyme catalyses (6R)-5,10-methylene-5,6,7,8-tetrahydrofolate + glycine + H2O = (6S)-5,6,7,8-tetrahydrofolate + L-serine. It participates in one-carbon metabolism; tetrahydrofolate interconversion. Its pathway is amino-acid biosynthesis; glycine biosynthesis; glycine from L-serine: step 1/1. Catalyzes the reversible interconversion of serine and glycine with tetrahydrofolate (THF) serving as the one-carbon carrier. This reaction serves as the major source of one-carbon groups required for the biosynthesis of purines, thymidylate, methionine, and other important biomolecules. Also exhibits THF-independent aldolase activity toward beta-hydroxyamino acids, producing glycine and aldehydes, via a retro-aldol mechanism. The polypeptide is Serine hydroxymethyltransferase (Macrococcus caseolyticus (strain JCSC5402) (Macrococcoides caseolyticum)).